The primary structure comprises 682 residues: MSRKQLALFEPVLLVQALTDAVKKLSPRAQWRNPVMFVVWAGSVLTTLLTLAMVTGQIAGSALFTGVISLWLWFTVLFANFAEALAEGRSKAQANSLKGVKKTAFARRLRAPRHDAQADNVPAAELRKGDIVLVKAGDIIPCDGEVIEGGASVDESAITGESAPVIRESGGDFASVTGGTRILSDWLVIACSVNPGETFLDRMIAMVEGAQRRKTPNEIALTILLIALTIVFLLATATLWPFSAWGGNAVSVTVLVALLVCLIPTTIGGLLSAIGVAGMSRMLGANVIATSGRAVEAAGDVDVLLLDKTGTITLGNRQASDFIPARGVDERTLADAAQLASLADETPEGRSIVILAKQRFNLRERDVQSLHATFVPFTAQSRMSGINIDNRMIRKGSVDAIRRHVESNGGHFPADVEQNVENVARLGATPLVVVEGARVLGVIALKDIVKGGIKERFAQLRKMGIKTVMITGDNRLTAAAIAAEAGVDDFLAEATPEAKLALIRQYQAEGRLVAMTGDGTNDAPALAQADVAVAMNSGTQAAKEAGNMVDLDSNPTKLIEVVHIGKQMLMTRGSLTTFSIANDVAKYFAIIPAAFAATYPQLNALNVMGLHSPNSAILSAVIFNALIIIFLIPLALKGVSYKPLSASAMLRRNLWIYGLGGLVVPFIGIKVIDVLLTLLGLA.

The next 4 helical transmembrane spans lie at 34–54 (PVMF…LAMV), 58–78 (IAGS…TVLF), 219–239 (IALT…TATL), and 254–274 (VLVA…LSAI). The active-site 4-aspartylphosphate intermediate is the D307. ATP contacts are provided by residues D344, E348, 377–384 (FTAQSRMS), and K395. 2 residues coordinate Mg(2+): D518 and D522. Helical transmembrane passes span 588-608 (FAII…LNVM), 616-636 (AILS…PLAL), and 662-682 (LVVP…LGLA).

Belongs to the cation transport ATPase (P-type) (TC 3.A.3) family. Type IA subfamily. The system is composed of three essential subunits: KdpA, KdpB and KdpC.

It localises to the cell inner membrane. The enzyme catalyses K(+)(out) + ATP + H2O = K(+)(in) + ADP + phosphate + H(+). Its function is as follows. Part of the high-affinity ATP-driven potassium transport (or Kdp) system, which catalyzes the hydrolysis of ATP coupled with the electrogenic transport of potassium into the cytoplasm. This subunit is responsible for energy coupling to the transport system and for the release of the potassium ions to the cytoplasm. The protein is Potassium-transporting ATPase ATP-binding subunit of Salmonella paratyphi B (strain ATCC BAA-1250 / SPB7).